Here is a 367-residue protein sequence, read N- to C-terminus: Undecaprenyl-phosphate alpha-N-acetylglucosaminyl 1-phosphate transferase (367 aa).

A run of 10 helical transmembrane segments spans residues 3–23 (LLTV…FLFF), 46–66 (LIPL…FGIV), 69–89 (YIPH…IGAL), 132–152 (VLGP…INAF), 158–178 (IDGL…MILW), 187–207 (IWCF…LGIL), 213–233 (VFMG…ILLE), 242–262 (ISPV…VAIM), 294–314 (AFVL…LAEY), and 318–338 (VPEW…GYCI).

It belongs to the glycosyltransferase 4 family. WecA subfamily. It depends on Mg(2+) as a cofactor. Mn(2+) is required as a cofactor.

The protein localises to the cell inner membrane. The catalysed reaction is di-trans,octa-cis-undecaprenyl phosphate + UDP-N-acetyl-alpha-D-glucosamine = N-acetyl-alpha-D-glucosaminyl-di-trans,octa-cis-undecaprenyl diphosphate + UMP. Its pathway is bacterial outer membrane biogenesis; LPS O-antigen biosynthesis. It functions in the pathway bacterial outer membrane biogenesis; enterobacterial common antigen biosynthesis. Catalyzes the transfer of the GlcNAc-1-phosphate moiety from UDP-GlcNAc onto the carrier lipid undecaprenyl phosphate (C55-P), yielding GlcNAc-pyrophosphoryl-undecaprenyl (GlcNAc-PP-C55). In Escherichia coli O6:H1 (strain CFT073 / ATCC 700928 / UPEC), this protein is Undecaprenyl-phosphate alpha-N-acetylglucosaminyl 1-phosphate transferase.